Here is a 507-residue protein sequence, read N- to C-terminus: Cytochrome c-552 (507 aa).

The first 22 residues, 1–22, serve as a signal peptide directing secretion; sequence MTKFKLLLAGSLVAIVSMGLLA. Residues histidine 102, cysteine 130, cysteine 133, lysine 134, cysteine 168, cysteine 171, histidine 172, cysteine 211, cysteine 214, and histidine 215 each coordinate heme c. Ca(2+)-binding residues include glutamate 217, tyrosine 218, lysine 274, and glutamine 276. Tyrosine 218 contacts substrate. Histidine 277 contributes to the substrate binding site. Histidine 288, cysteine 295, cysteine 298, histidine 299, histidine 313, cysteine 326, cysteine 329, histidine 330, and histidine 405 together coordinate heme c.

It belongs to the cytochrome c-552 family. In terms of assembly, homodimer. Interacts with NrfH. May form a heterotetramer with NrfH. Requires Ca(2+) as cofactor. Heme c serves as cofactor.

It localises to the periplasm. The catalysed reaction is 6 Fe(III)-[cytochrome c] + NH4(+) + 2 H2O = 6 Fe(II)-[cytochrome c] + nitrite + 8 H(+). It participates in nitrogen metabolism; nitrate reduction (assimilation). Catalyzes the reduction of nitrite to ammonia, consuming six electrons in the process. Has very low activity toward hydroxylamine, and even lower activity toward sulfite. Sulfite reductase activity is maximal at neutral pH. This chain is Cytochrome c-552 (nrfA), found in Wolinella succinogenes (strain ATCC 29543 / DSM 1740 / CCUG 13145 / JCM 31913 / LMG 7466 / NCTC 11488 / FDC 602W) (Vibrio succinogenes).